The following is a 316-amino-acid chain: Probable prolyl 4-hydroxylase 7 (316 aa).

The Cytoplasmic segment spans residues 1–4 (MDSR). A helical; Signal-anchor for type II membrane protein transmembrane segment spans residues 5 to 24 (IFLAFSLCFLFTLPLISSAP). Topologically, residues 25–316 (NRFLTRSSNT…CRKSCKACSS (292 aa)) are lumenal. An N-linked (GlcNAc...) asparagine glycan is attached at N96. One can recognise a Fe2OG dioxygenase domain in the interval 139 to 261 (NGESMQILHY…KWSATRWIHV (123 aa)). Fe cation contacts are provided by H157 and D159. N-linked (GlcNAc...) asparagine glycosylation occurs at N233. H242 provides a ligand contact to Fe cation. K252 contacts 2-oxoglutarate. Positions 274–314 (CMDENVSCEKWAKAGECQKNPTYMVGSDKDHGYCRKSCKAC) constitute a ShKT domain. Disulfide bonds link C274–C314, C281–C307, and C290–C311. N278 carries an N-linked (GlcNAc...) asparagine glycan.

Belongs to the P4HA family. Requires Fe(2+) as cofactor. The cofactor is L-ascorbate.

It localises to the endoplasmic reticulum membrane. It carries out the reaction L-prolyl-[collagen] + 2-oxoglutarate + O2 = trans-4-hydroxy-L-prolyl-[collagen] + succinate + CO2. Catalyzes the post-translational formation of 4-hydroxyproline in -Xaa-Pro-Gly- sequences in proline-rich peptide sequences of plant glycoproteins and other proteins. Hydroxyprolines are important constituent of many plant cell wall glycoproteins such as extensins, hydroxyproline-rich glycoproteins, lectins and arabinogalactan proteins. In Arabidopsis thaliana (Mouse-ear cress), this protein is Probable prolyl 4-hydroxylase 7.